A 58-amino-acid polypeptide reads, in one-letter code: MVYHNSMCTYLFYNKIGFGLDYQLSVYLGLATTIVCIVLFFTMLKPLGTRDEEAYINN.

The chain crosses the membrane as a helical span at residues 24–44 (LSVYLGLATTIVCIVLFFTML).

It is found in the membrane. This is an uncharacterized protein from Haemophilus influenzae (strain ATCC 51907 / DSM 11121 / KW20 / Rd).